The chain runs to 128 residues: Nanos homolog 1 (128 aa).

The segment at 7–23 (FDSWSDYLGLSSLISRG) is essential for its translational repressor activity. Residues 25–52 (QPQREGERPRWDVLSPASAEPLPSNESV) form a disordered region. The segment at 56 to 110 (GCGFCRSNREALSLYTSHRLRALDGRVLCPVLRGYTCPLCGANGDWAHTMRYCPL) adopts a Nanos-type zinc-finger fold. Residues Cys-57, Cys-60, His-73, Cys-84, Cys-92, Cys-95, His-103, and Cys-108 each coordinate Zn(2+). 2 short sequence motifs (C2HC) span residues 57–84 (CGFC…RVLC) and 92–108 (CPLC…MRYC).

The protein belongs to the nanos family. As to quaternary structure, interacts with ccnb1. As to expression, ovary and testis.

The protein resides in the cytoplasm. It is found in the perinuclear region. Its function is as follows. Acts as a translational repressor. Can mediate repression affecting different steps in the translation process: cap-driven, IRES-driven, polyadenylated RNAs or nonpolyadenylated RNAs. Essential for the development of primordial germ cells (PGCs) by ensuring their proper migration and survival. In Xenopus laevis (African clawed frog), this protein is Nanos homolog 1 (nanos1).